Consider the following 92-residue polypeptide: Large ribosomal subunit protein uL24 (92 aa).

Belongs to the universal ribosomal protein uL24 family. As to quaternary structure, part of the 50S ribosomal subunit.

One of two assembly initiator proteins, it binds directly to the 5'-end of the 23S rRNA, where it nucleates assembly of the 50S subunit. Its function is as follows. One of the proteins that surrounds the polypeptide exit tunnel on the outside of the subunit. The protein is Large ribosomal subunit protein uL24 of Opitutus terrae (strain DSM 11246 / JCM 15787 / PB90-1).